A 162-amino-acid polypeptide reads, in one-letter code: Transcription elongation factor GreA (162 aa).

A coiled-coil region spans residues 45–65 (NAEYHAAKERQLFIEARINEL).

It belongs to the GreA/GreB family.

Functionally, necessary for efficient RNA polymerase transcription elongation past template-encoded arresting sites. The arresting sites in DNA have the property of trapping a certain fraction of elongating RNA polymerases that pass through, resulting in locked ternary complexes. Cleavage of the nascent transcript by cleavage factors such as GreA or GreB allows the resumption of elongation from the new 3'terminus. GreA releases sequences of 2 to 3 nucleotides. In Wolinella succinogenes (strain ATCC 29543 / DSM 1740 / CCUG 13145 / JCM 31913 / LMG 7466 / NCTC 11488 / FDC 602W) (Vibrio succinogenes), this protein is Transcription elongation factor GreA.